The primary structure comprises 324 residues: Beta-ketoacyl-[acyl-carrier-protein] synthase III (324 aa).

Catalysis depends on residues Cys-112 and His-249. An ACP-binding region spans residues Gln-250–Arg-254. Residue Asn-279 is part of the active site.

The protein belongs to the thiolase-like superfamily. FabH family. As to quaternary structure, homodimer.

Its subcellular location is the cytoplasm. It catalyses the reaction malonyl-[ACP] + acetyl-CoA + H(+) = 3-oxobutanoyl-[ACP] + CO2 + CoA. Its pathway is lipid metabolism; fatty acid biosynthesis. Its function is as follows. Catalyzes the condensation reaction of fatty acid synthesis by the addition to an acyl acceptor of two carbons from malonyl-ACP. Catalyzes the first condensation reaction which initiates fatty acid synthesis and may therefore play a role in governing the total rate of fatty acid production. Possesses both acetoacetyl-ACP synthase and acetyl transacylase activities. Its substrate specificity determines the biosynthesis of branched-chain and/or straight-chain of fatty acids. The polypeptide is Beta-ketoacyl-[acyl-carrier-protein] synthase III (Streptococcus equi subsp. equi (strain 4047)).